A 277-amino-acid polypeptide reads, in one-letter code: MTDKYAVFGNPIAQSKSPFIHTEFAKQTQQDLSYEAILAPVDQFDSSLVAFFADGGKGANVTAPFKEQAFSMCDELSEMAKLAGSVNTLFNLPYGKIGGDNTDGVGLVNDLEMLFGSLKGKRVLLVGAGGAARGCILPILQHNVAQLIICNRTHEKAEQLQTLFNEYGNFFAKPIEELISPFDLVINSTSAGLSGQLIALPSVIVDETTDCYDMTYSQQTTVFNQWAQAQNARKTADGLGMLVGQAAKSFSLWRGITPDTGSVMRKLRESLAQEAID.

Shikimate is bound by residues 15–17 (SKS) and T62. K66 functions as the Proton acceptor in the catalytic mechanism. E78 lines the NADP(+) pocket. Shikimate is bound by residues N87 and D103. Residues 127-131 (GAGGA), 151-156 (NRTHEK), and G238 each bind NADP(+).

This sequence belongs to the shikimate dehydrogenase family. As to quaternary structure, homodimer.

The catalysed reaction is shikimate + NADP(+) = 3-dehydroshikimate + NADPH + H(+). The protein operates within metabolic intermediate biosynthesis; chorismate biosynthesis; chorismate from D-erythrose 4-phosphate and phosphoenolpyruvate: step 4/7. Its function is as follows. Involved in the biosynthesis of the chorismate, which leads to the biosynthesis of aromatic amino acids. Catalyzes the reversible NADPH linked reduction of 3-dehydroshikimate (DHSA) to yield shikimate (SA). This Shewanella frigidimarina (strain NCIMB 400) protein is Shikimate dehydrogenase (NADP(+)).